A 311-amino-acid polypeptide reads, in one-letter code: Ribose-5-phosphate isomerase (311 aa).

Over residues 22–32 the composition is skewed to gly residues; that stretch reads AGGAASGGGGN. The disordered stretch occupies residues 22–67; it reads AGGAASGGGGNSWDLPGSHVRLPGRAQSGTRGGAGNTSTSCGDSNS. Arg52 bears the Omega-N-methylarginine mark. Polar residues predominate over residues 57–67; it reads NTSTSCGDSNS. The residue at position 106 (Ser106) is a Phosphoserine.

This sequence belongs to the ribose 5-phosphate isomerase family.

It carries out the reaction aldehydo-D-ribose 5-phosphate = D-ribulose 5-phosphate. It participates in carbohydrate degradation; pentose phosphate pathway; D-ribose 5-phosphate from D-ribulose 5-phosphate (non-oxidative stage): step 1/1. Its function is as follows. Catalyzes the reversible conversion of ribose-5-phosphate to ribulose 5-phosphate and participates in the first step of the non-oxidative branch of the pentose phosphate pathway. The chain is Ribose-5-phosphate isomerase from Homo sapiens (Human).